The primary structure comprises 540 residues: Chaperonin GroEL 1 (540 aa).

Residues 29–32 (TLGP), 86–90 (DGTTT), glycine 413, 478–480 (NAA), and aspartate 494 each bind ATP.

Belongs to the chaperonin (HSP60) family. In terms of assembly, forms a cylinder of 14 subunits composed of two heptameric rings stacked back-to-back. Interacts with the co-chaperonin GroES.

It is found in the cytoplasm. The catalysed reaction is ATP + H2O + a folded polypeptide = ADP + phosphate + an unfolded polypeptide.. In terms of biological role, together with its co-chaperonin GroES, plays an essential role in assisting protein folding. The GroEL-GroES system forms a nano-cage that allows encapsulation of the non-native substrate proteins and provides a physical environment optimized to promote and accelerate protein folding. This is Chaperonin GroEL 1 from Mycobacterium sp. (strain JLS).